A 96-amino-acid chain; its full sequence is Co-chaperonin GroES (96 aa).

This sequence belongs to the GroES chaperonin family. As to quaternary structure, heptamer of 7 subunits arranged in a ring. Interacts with the chaperonin GroEL.

The protein resides in the cytoplasm. Together with the chaperonin GroEL, plays an essential role in assisting protein folding. The GroEL-GroES system forms a nano-cage that allows encapsulation of the non-native substrate proteins and provides a physical environment optimized to promote and accelerate protein folding. GroES binds to the apical surface of the GroEL ring, thereby capping the opening of the GroEL channel. The polypeptide is Co-chaperonin GroES (Ralstonia nicotianae (strain ATCC BAA-1114 / GMI1000) (Ralstonia solanacearum)).